Consider the following 306-residue polypeptide: Ethylmalonyl-CoA decarboxylase (306 aa).

An N6-acetyllysine; alternate modification is found at K216. At K216 the chain carries N6-succinyllysine; alternate.

Belongs to the enoyl-CoA hydratase/isomerase family.

It localises to the cytoplasm. Its subcellular location is the cytosol. It catalyses the reaction (2S)-ethylmalonyl-CoA + H(+) = butanoyl-CoA + CO2. The enzyme catalyses (S)-methylmalonyl-CoA + H(+) = propanoyl-CoA + CO2. It carries out the reaction (2R)-ethylmalonyl-CoA + H(+) = butanoyl-CoA + CO2. In terms of biological role, decarboxylates ethylmalonyl-CoA, a potentially toxic metabolite, to form butyryl-CoA, suggesting it might be involved in metabolite proofreading. Acts preferentially on (S)-ethylmalonyl-CoA but also has some activity on the (R)-isomer. Also has methylmalonyl-CoA decarboxylase activity at lower level. This is Ethylmalonyl-CoA decarboxylase (ECHDC1) from Bos taurus (Bovine).